The primary structure comprises 199 residues: 7-methyl-GTP pyrophosphatase (199 aa).

D74 acts as the Proton acceptor in catalysis.

The protein belongs to the Maf family. YceF subfamily. Requires a divalent metal cation as cofactor.

The protein resides in the cytoplasm. It carries out the reaction N(7)-methyl-GTP + H2O = N(7)-methyl-GMP + diphosphate + H(+). In terms of biological role, nucleoside triphosphate pyrophosphatase that hydrolyzes 7-methyl-GTP (m(7)GTP). May have a dual role in cell division arrest and in preventing the incorporation of modified nucleotides into cellular nucleic acids. The protein is 7-methyl-GTP pyrophosphatase of Cupriavidus metallidurans (strain ATCC 43123 / DSM 2839 / NBRC 102507 / CH34) (Ralstonia metallidurans).